The primary structure comprises 260 residues: MLEKVKNIIVVLSGKGGVGKSTVSTQLSLALRKNGFKVGLLDIDLCGPSVPYLLGLEGRDIFQCDEGWVPVYTDESQTLAVMSIGFLLKNREDPVIWRGPKKTMMIRQFLTDVRWDELDYLIIDTPPGTSDEHITVMECLKEVGCHGAIIVTTPQEVALDDVRKEITFCKKTGINILGIVENMSGFVCPHCTSCTNIFSSNGGASLATYAQVPHLGTLPIDPRVGVLAGSTTSVLDELPDSTTAEVLTHIVEKLKTISVS.

An ATP-binding site is contributed by 14–21; that stretch reads GKGGVGKS. Positions 188 and 191 each coordinate [4Fe-4S] cluster.

This sequence belongs to the Mrp/NBP35 ATP-binding proteins family. NUBP2/CFD1 subfamily. As to quaternary structure, heterotetramer of 2 Nubp1 and 2 Nubp2 chains. [4Fe-4S] cluster serves as cofactor.

It localises to the cytoplasm. Its function is as follows. Component of the cytosolic iron-sulfur (Fe/S) protein assembly (CIA) machinery. Required for maturation of extramitochondrial Fe-S proteins. The Nubp1-Nubp2 heterotetramer forms a Fe-S scaffold complex, mediating the de novo assembly of an Fe-S cluster and its transfer to target apoproteins. The polypeptide is Cytosolic Fe-S cluster assembly factor Nubp2 homolog (Drosophila erecta (Fruit fly)).